A 536-amino-acid polypeptide reads, in one-letter code: Berberine bridge enzyme-like 2 (536 aa).

Residues 1-20 (MKIFCLILFLISSFISTSLA) form the signal peptide. C35 and C98 form a disulfide bridge. N-linked (GlcNAc...) asparagine glycosylation is found at N38, N73, N136, N266, N334, and N352. In terms of domain architecture, FAD-binding PCMH-type spans 76–250 (ATPKPAIVIA…LAFKIKLVPV (175 aa)). A cross-link (6-(S-cysteinyl)-8alpha-(pros-histidyl)-FAD (His-Cys)) is located at residues 113–175 (HDYEGVSYIS…KSHGFPAGVC (63 aa)).

Belongs to the oxygen-dependent FAD-linked oxidoreductase family. The cofactor is FAD. The FAD cofactor is bound via a bicovalent 6-S-cysteinyl, 8alpha-N1-histidyl FAD linkage.

It localises to the secreted. Its subcellular location is the cell wall. This chain is Berberine bridge enzyme-like 2, found in Arabidopsis thaliana (Mouse-ear cress).